The sequence spans 83 residues: Kappa-ctenitoxin-Pn1a (83 aa).

A signal peptide spans 1 to 21 (MWFKIQVLVLAITLITLGIQA). The propeptide occupies 22–37 (EPNSSPNNPLIVEEDR). 4 disulfides stabilise this stretch: Cys40–Cys55, Cys47–Cys60, Cys54–Cys71, and Cys62–Cys69. The propeptide occupies 78–83 (LFGFGK).

It belongs to the neurotoxin 02 (plectoxin) family. Expressed by the venom gland.

It localises to the secreted. Antagonist of L-type calcium channels (Cav1/CACNA1). In GH3 neuroendocrinal cell line, it reversibly inhibits the A-type potassium current but does not block other potassium currents or calcium channels. Shows an important acetylcholine-mediated antiarrhythmogenic effect in isolated hearts. In vivo, causes paralysis in the posterior limbs and gradual decreases in movement and aggression during 24 hours at dose levels of 5 ug per mouse. The protein is Kappa-ctenitoxin-Pn1a of Phoneutria nigriventer (Brazilian armed spider).